The following is a 411-amino-acid chain: Multifunctional CCA protein (411 aa).

Residues Gly8 and Arg11 each contribute to the ATP site. Residues Gly8 and Arg11 each contribute to the CTP site. Mg(2+)-binding residues include Asp21 and Asp23. Positions 91, 137, and 140 each coordinate ATP. 3 residues coordinate CTP: Arg91, Arg137, and Arg140. The 102-residue stretch at 228 to 329 (CGIHTLMVAK…VNILDQIDSW (102 aa)) folds into the HD domain.

It belongs to the tRNA nucleotidyltransferase/poly(A) polymerase family. Bacterial CCA-adding enzyme type 1 subfamily. Monomer. Can also form homodimers and oligomers. It depends on Mg(2+) as a cofactor. Ni(2+) serves as cofactor.

It catalyses the reaction a tRNA precursor + 2 CTP + ATP = a tRNA with a 3' CCA end + 3 diphosphate. The enzyme catalyses a tRNA with a 3' CCA end + 2 CTP + ATP = a tRNA with a 3' CCACCA end + 3 diphosphate. In terms of biological role, catalyzes the addition and repair of the essential 3'-terminal CCA sequence in tRNAs without using a nucleic acid template. Adds these three nucleotides in the order of C, C, and A to the tRNA nucleotide-73, using CTP and ATP as substrates and producing inorganic pyrophosphate. tRNA 3'-terminal CCA addition is required both for tRNA processing and repair. Also involved in tRNA surveillance by mediating tandem CCA addition to generate a CCACCA at the 3' terminus of unstable tRNAs. While stable tRNAs receive only 3'-terminal CCA, unstable tRNAs are marked with CCACCA and rapidly degraded. The protein is Multifunctional CCA protein of Photobacterium profundum (strain SS9).